A 212-amino-acid chain; its full sequence is Ribosomal RNA small subunit methyltransferase G (212 aa).

Residues G80, L85, 131 to 132 (AE), and R146 each bind S-adenosyl-L-methionine.

Belongs to the methyltransferase superfamily. RNA methyltransferase RsmG family.

It localises to the cytoplasm. It carries out the reaction guanosine(527) in 16S rRNA + S-adenosyl-L-methionine = N(7)-methylguanosine(527) in 16S rRNA + S-adenosyl-L-homocysteine. Its function is as follows. Specifically methylates the N7 position of guanine in position 527 of 16S rRNA. The chain is Ribosomal RNA small subunit methyltransferase G from Xanthomonas campestris pv. campestris (strain 8004).